Consider the following 260-residue polypeptide: Hemin import ATP-binding protein HmuV (260 aa).

Residues 3–239 (LHAQQISLSI…QRLSEVYGCD (237 aa)) enclose the ABC transporter domain. Position 35–42 (35–42 (GPNGSGKS)) interacts with ATP.

It belongs to the ABC transporter superfamily. Heme (hemin) importer (TC 3.A.1.14.5) family. In terms of assembly, the complex is composed of two ATP-binding proteins (HmuV), two transmembrane proteins (HmuU) and a solute-binding protein (HmuT).

The protein localises to the cell inner membrane. In terms of biological role, part of the ABC transporter complex HmuTUV involved in hemin import. Responsible for energy coupling to the transport system. The protein is Hemin import ATP-binding protein HmuV of Ruegeria sp. (strain TM1040) (Silicibacter sp.).